The following is a 116-amino-acid chain: uncharacterized protein (116 aa).

A disordered region spans residues 97–116; it reads AKGKGNEGREEAEEASGKSK. The segment covering 100 to 116 has biased composition (basic and acidic residues); the sequence is KGNEGREEAEEASGKSK.

Belongs to the UPF0440 family.

This is an uncharacterized protein from Pyrococcus horikoshii (strain ATCC 700860 / DSM 12428 / JCM 9974 / NBRC 100139 / OT-3).